Here is a 341-residue protein sequence, read N- to C-terminus: 4-hydroxythreonine-4-phosphate dehydrogenase (341 aa).

Threonine 126 lines the substrate pocket. The a divalent metal cation site is built by histidine 161, histidine 206, and histidine 272. Residues lysine 280, asparagine 289, and arginine 298 each coordinate substrate.

This sequence belongs to the PdxA family. In terms of assembly, homodimer. A divalent metal cation serves as cofactor.

The protein resides in the cytoplasm. The catalysed reaction is 4-(phosphooxy)-L-threonine + NAD(+) = 3-amino-2-oxopropyl phosphate + CO2 + NADH. Its pathway is cofactor biosynthesis; pyridoxine 5'-phosphate biosynthesis; pyridoxine 5'-phosphate from D-erythrose 4-phosphate: step 4/5. Functionally, catalyzes the NAD(P)-dependent oxidation of 4-(phosphooxy)-L-threonine (HTP) into 2-amino-3-oxo-4-(phosphooxy)butyric acid which spontaneously decarboxylates to form 3-amino-2-oxopropyl phosphate (AHAP). This chain is 4-hydroxythreonine-4-phosphate dehydrogenase, found in Thermosynechococcus vestitus (strain NIES-2133 / IAM M-273 / BP-1).